A 740-amino-acid polypeptide reads, in one-letter code: DNA ligase (740 aa).

The interval 1-20 (MGPGLTLSGMTEQSSLFPAP) is disordered. NAD(+)-binding positions include 56-60 (DAEYD), 105-106 (SI), and Glu142. Lys144 serves as the catalytic N6-AMP-lysine intermediate. NAD(+)-binding residues include Arg165, Glu201, Lys322, and Lys346. Residues Cys471, Cys474, Cys489, and Cys495 each coordinate Zn(2+). The region spanning 654 to 740 (AATLPLAGMT…RGAPPNAGGG (87 aa)) is the BRCT domain.

It belongs to the NAD-dependent DNA ligase family. LigA subfamily. The cofactor is Mg(2+). Mn(2+) serves as cofactor.

It catalyses the reaction NAD(+) + (deoxyribonucleotide)n-3'-hydroxyl + 5'-phospho-(deoxyribonucleotide)m = (deoxyribonucleotide)n+m + AMP + beta-nicotinamide D-nucleotide.. DNA ligase that catalyzes the formation of phosphodiester linkages between 5'-phosphoryl and 3'-hydroxyl groups in double-stranded DNA using NAD as a coenzyme and as the energy source for the reaction. It is essential for DNA replication and repair of damaged DNA. This Acidovorax ebreus (strain TPSY) (Diaphorobacter sp. (strain TPSY)) protein is DNA ligase.